The following is a 247-amino-acid chain: Transmembrane protein 33 (247 aa).

Ala-2 carries the post-translational modification N-acetylalanine. Residues Ala-2–Arg-31 are Lumenal-facing. Residues Leu-32–Ala-52 form a helical membrane-spanning segment. Residues Ser-53–Leu-100 are Cytoplasmic-facing. The helical transmembrane segment at Ile-101–Leu-121 threads the bilayer. The Lumenal portion of the chain corresponds to His-122–Asn-155. Residues Ile-156 to Phe-176 traverse the membrane as a helical segment. The Cytoplasmic portion of the chain corresponds to Ser-177–Ala-247.

Belongs to the PER33/POM33 family. As to quaternary structure, interacts with EIF2AK3. Interacts with RTN1, RTN2, RTN3, RTN4 and ARL6IP1. Interacts with RNF5. Interacts with RNF26. Interacts with PKD2.

Its subcellular location is the endoplasmic reticulum membrane. The protein resides in the melanosome. It localises to the nucleus envelope. Acts as a regulator of the tubular endoplasmic reticulum (ER) network by modulating intracellular calcium homeostasis. Mechanistically, stimulates PKD2 calcium-dependent activity. Suppresses the RTN3/4-induced formation of the ER tubules. Positively regulates PERK-mediated and IRE1-mediated unfolded protein response signaling. Plays an essential role in VEGF-mediated release of Ca(2+) from ER stores during angiogenesis. Also plays a role in the modulation of innate immune signaling through the cGAS-STING pathway by interacting with RNF26. Participates in lipid metabolism by acting as a downstream effector of the pyruvate kinase/PKM. Forms a complex with RNF5 to facilitate polyubiquitination and subsequent degradation of SCAP on the ER membrane. The chain is Transmembrane protein 33 (Tmem33) from Mus musculus (Mouse).